The primary structure comprises 371 residues: Vasopressin V2 receptor (371 aa).

A disordered region spans residues 1–30 (MLMASTTSAVPGHPSLPSLPSNSSQERPLD). Residues 1 to 38 (MLMASTTSAVPGHPSLPSLPSNSSQERPLDTRDPLLAR) lie on the Extracellular side of the membrane. Over residues 15 to 24 (SLPSLPSNSS) the composition is skewed to low complexity. Residue N22 is glycosylated (N-linked (GlcNAc...) asparagine). Residues 39–63 (AELALLSIVFVAVALSNGLVLAALA) form a helical membrane-spanning segment. Residues 64–77 (RRGRRGHWAPIHVF) lie on the Cytoplasmic side of the membrane. The helical transmembrane segment at 78 to 98 (IGHLCLADLAVALFQVLPQLA) threads the bilayer. The Extracellular portion of the chain corresponds to 99-113 (WKATDRFRGPDALCR). A helical membrane pass occupies residues 114 to 135 (AVKYLQMVGMYASSYMILAMTL). Topologically, residues 136–159 (DRHRAICRPMLAYRHGSGAHWNRP) are cytoplasmic. A helical transmembrane segment spans residues 160-180 (VLVAWAFSLLLSLPQLFIFAQ). At 181 to 200 (RNVEGGSGVTDCWACFAEPW) the chain is on the extracellular side. The chain crosses the membrane as a helical span at residues 201 to 220 (GRRTYVTWIALMVFVAPTLG). Topologically, residues 221-271 (IAACQVLIFREIHASLVPGPSERPGGRRRGRRTGSPGEGAHVSAAVAKTVR) are cytoplasmic. Positions 240–259 (PSERPGGRRRGRRTGSPGEG) are disordered. A helical transmembrane segment spans residues 272-293 (MTLVIVVVYVLCWAPFFLVQLW). Residues 294 to 308 (AAWDPEAPLEGAPFV) lie on the Extracellular side of the membrane. Residues 309 to 328 (LLMLLASLNSCTNPWIYASF) traverse the membrane as a helical segment. At 329–371 (SSSVSSELRSLLCCARGRTPPSLGPQDESCTTASSSLAKDTSS) the chain is on the cytoplasmic side. S-palmitoyl cysteine attachment occurs at residues C341 and C342. The interval 349 to 371 (PSLGPQDESCTTASSSLAKDTSS) is disordered. Polar residues predominate over residues 356 to 371 (ESCTTASSSLAKDTSS).

Belongs to the G-protein coupled receptor 1 family. Vasopressin/oxytocin receptor subfamily. As to quaternary structure, interacts with ARRDC4. Identified in a complex containing at least ARRDC4, V2R and HGS. Interacts with TMEM147. As to expression, kidney.

The protein localises to the cell membrane. Its function is as follows. Receptor for arginine vasopressin. The activity of this receptor is mediated by G proteins which activate adenylate cyclase. Involved in renal water reabsorption. This is Vasopressin V2 receptor (AVPR2) from Homo sapiens (Human).